We begin with the raw amino-acid sequence, 305 residues long: UDP-3-O-acyl-N-acetylglucosamine deacetylase (305 aa).

Zn(2+)-binding residues include His-77, His-234, and Asp-238. His-261 serves as the catalytic Proton donor.

It belongs to the LpxC family. Zn(2+) is required as a cofactor.

It carries out the reaction a UDP-3-O-[(3R)-3-hydroxyacyl]-N-acetyl-alpha-D-glucosamine + H2O = a UDP-3-O-[(3R)-3-hydroxyacyl]-alpha-D-glucosamine + acetate. Its pathway is glycolipid biosynthesis; lipid IV(A) biosynthesis; lipid IV(A) from (3R)-3-hydroxytetradecanoyl-[acyl-carrier-protein] and UDP-N-acetyl-alpha-D-glucosamine: step 2/6. Catalyzes the hydrolysis of UDP-3-O-myristoyl-N-acetylglucosamine to form UDP-3-O-myristoylglucosamine and acetate, the committed step in lipid A biosynthesis. This chain is UDP-3-O-acyl-N-acetylglucosamine deacetylase, found in Oleidesulfovibrio alaskensis (strain ATCC BAA-1058 / DSM 17464 / G20) (Desulfovibrio alaskensis).